A 197-amino-acid chain; its full sequence is MEVHNVELVMSAVAPSQYPTTGFPEIGLAGRSNVGKSSLINVLINRNSYARTSSQPGKTQTLNFYKVEDQLYFVDVPGYGYAKVSKKEREKWGQMIETYLTSRETLRGVVILVDARHAPTKDDVAMYEWMRYYEMPLLVVATKSDKIPRGKWNKQESLIKKTLNFQAEDDFIAFSAKTKEGKDAVWQWIEAHTVGGN.

In terms of domain architecture, EngB-type G spans 22–195; that stretch reads GFPEIGLAGR…WQWIEAHTVG (174 aa). Residues 30 to 37, 57 to 61, 75 to 78, 142 to 145, and 174 to 176 each bind GTP; these read GRSNVGKS, GKTQT, DVPG, TKSD, and FSA. Mg(2+) contacts are provided by S37 and T59.

It belongs to the TRAFAC class TrmE-Era-EngA-EngB-Septin-like GTPase superfamily. EngB GTPase family. The cofactor is Mg(2+).

Functionally, necessary for normal cell division and for the maintenance of normal septation. This Lactiplantibacillus plantarum (strain ATCC BAA-793 / NCIMB 8826 / WCFS1) (Lactobacillus plantarum) protein is Probable GTP-binding protein EngB.